Reading from the N-terminus, the 350-residue chain is Ketol-acid reductoisomerase (NADP(+)) (350 aa).

The KARI N-terminal Rossmann domain maps to 4–187 (VSITTDYSRM…GGARANIIKT (184 aa)). Residues 30–33 (YGSQ), R53, T58, and 88–91 (DMVQ) contribute to the NADP(+) site. H113 is a catalytic residue. NADP(+) is bound at residue G139. The region spanning 188-333 (TFKEETETDL…KQLRAKMVWL (146 aa)) is the KARI C-terminal knotted domain. Positions 196, 200, 232, and 236 each coordinate Mg(2+). S257 contributes to the substrate binding site.

This sequence belongs to the ketol-acid reductoisomerase family. Requires Mg(2+) as cofactor.

The enzyme catalyses (2R)-2,3-dihydroxy-3-methylbutanoate + NADP(+) = (2S)-2-acetolactate + NADPH + H(+). It carries out the reaction (2R,3R)-2,3-dihydroxy-3-methylpentanoate + NADP(+) = (S)-2-ethyl-2-hydroxy-3-oxobutanoate + NADPH + H(+). The protein operates within amino-acid biosynthesis; L-isoleucine biosynthesis; L-isoleucine from 2-oxobutanoate: step 2/4. It participates in amino-acid biosynthesis; L-valine biosynthesis; L-valine from pyruvate: step 2/4. Its function is as follows. Involved in the biosynthesis of branched-chain amino acids (BCAA). Catalyzes an alkyl-migration followed by a ketol-acid reduction of (S)-2-acetolactate (S2AL) to yield (R)-2,3-dihydroxy-isovalerate. In the isomerase reaction, S2AL is rearranged via a Mg-dependent methyl migration to produce 3-hydroxy-3-methyl-2-ketobutyrate (HMKB). In the reductase reaction, this 2-ketoacid undergoes a metal-dependent reduction by NADPH to yield (R)-2,3-dihydroxy-isovalerate. The sequence is that of Ketol-acid reductoisomerase (NADP(+)) from Xylella fastidiosa (strain Temecula1 / ATCC 700964).